The primary structure comprises 108 residues: Ig kappa chain V-V region NQ5-89.4 (108 aa).

The segment at 1–23 (DIQMTQTTSSLSASLGHRVTITC) is framework-1. Cys23 and Cys88 are oxidised to a cystine. The tract at residues 24-34 (SASQDISNYLN) is complementarity-determining-1. Residues 35–49 (WYQQKPDGTVKLLIY) form a framework-2 region. The segment at 50 to 56 (YTSRLHS) is complementarity-determining-2. The tract at residues 57-88 (GVPSRFSGSGSATDYSLTITNLQQEDXATYXC) is framework-3. The complementarity-determining-3 stretch occupies residues 89-97 (QQGNTLPYT). The tract at residues 98–107 (FGGGTKLXIK) is framework-4.

Its function is as follows. Anti-2-phenyl oxazolone (PHOX) Antibody. The polypeptide is Ig kappa chain V-V region NQ5-89.4 (Mus musculus (Mouse)).